We begin with the raw amino-acid sequence, 351 residues long: tRNA (guanine(10)-N2)-dimethyltransferase (351 aa).

The THUMP domain occupies 57–165 (EGHRIIFRYN…ENTFFISNVL (109 aa)).

This sequence belongs to the methyltransferase superfamily. Trm-G10 family. As to quaternary structure, monomer.

It is found in the cytoplasm. The enzyme catalyses guanosine(10) in tRNA + 2 S-adenosyl-L-methionine = N(2)-dimethylguanosine(10) in tRNA + 2 S-adenosyl-L-homocysteine + 2 H(+). In terms of biological role, catalyzes the adenosylmethionine-dependent methylation of the exocyclic amino group (N(2)) of guanosine at position 10 of various tRNAs. Acts via a two-step process that leads to the formation of either N(2)-monomethyl (m(2)G) or N(2)-dimethylguanosine (m(2)(2)G). The sequence is that of tRNA (guanine(10)-N2)-dimethyltransferase (trmG10) from Methanocaldococcus jannaschii (strain ATCC 43067 / DSM 2661 / JAL-1 / JCM 10045 / NBRC 100440) (Methanococcus jannaschii).